The sequence spans 432 residues: Adenylosuccinate synthetase (432 aa).

Residues 13–19 and 41–43 each bind GTP; these read GDEGKGK and GHT. Aspartate 14 (proton acceptor) is an active-site residue. Aspartate 14 and glycine 41 together coordinate Mg(2+). Residues 14–17, 39–42, threonine 130, arginine 144, glutamine 225, threonine 240, and arginine 304 contribute to the IMP site; these read DEGK and NAGH. The active-site Proton donor is histidine 42. A substrate-binding site is contributed by 300–306; the sequence is ATTGRRR. GTP-binding positions include arginine 306, 332 to 334, and 415 to 417; these read KLD and STG.

Belongs to the adenylosuccinate synthetase family. Homodimer. Mg(2+) serves as cofactor.

The protein resides in the cytoplasm. It carries out the reaction IMP + L-aspartate + GTP = N(6)-(1,2-dicarboxyethyl)-AMP + GDP + phosphate + 2 H(+). Its pathway is purine metabolism; AMP biosynthesis via de novo pathway; AMP from IMP: step 1/2. Plays an important role in the de novo pathway of purine nucleotide biosynthesis. Catalyzes the first committed step in the biosynthesis of AMP from IMP. This chain is Adenylosuccinate synthetase, found in Serratia proteamaculans (strain 568).